The chain runs to 128 residues: Ribonuclease P protein component (128 aa).

It belongs to the RnpA family. As to quaternary structure, consists of a catalytic RNA component (M1 or rnpB) and a protein subunit.

It catalyses the reaction Endonucleolytic cleavage of RNA, removing 5'-extranucleotides from tRNA precursor.. RNaseP catalyzes the removal of the 5'-leader sequence from pre-tRNA to produce the mature 5'-terminus. It can also cleave other RNA substrates such as 4.5S RNA. The protein component plays an auxiliary but essential role in vivo by binding to the 5'-leader sequence and broadening the substrate specificity of the ribozyme. This chain is Ribonuclease P protein component, found in Chromohalobacter salexigens (strain ATCC BAA-138 / DSM 3043 / CIP 106854 / NCIMB 13768 / 1H11).